A 545-amino-acid polypeptide reads, in one-letter code: ATP synthase subunit alpha (545 aa).

173–180 (GDRQTGKT) contributes to the ATP binding site.

Belongs to the ATPase alpha/beta chains family. F-type ATPases have 2 components, CF(1) - the catalytic core - and CF(0) - the membrane proton channel. CF(1) has five subunits: alpha(3), beta(3), gamma(1), delta(1), epsilon(1). CF(0) has three main subunits: a(1), b(2) and c(9-12). The alpha and beta chains form an alternating ring which encloses part of the gamma chain. CF(1) is attached to CF(0) by a central stalk formed by the gamma and epsilon chains, while a peripheral stalk is formed by the delta and b chains.

The protein resides in the cell membrane. The enzyme catalyses ATP + H2O + 4 H(+)(in) = ADP + phosphate + 5 H(+)(out). In terms of biological role, produces ATP from ADP in the presence of a proton gradient across the membrane. The alpha chain is a regulatory subunit. The sequence is that of ATP synthase subunit alpha from Clavibacter sepedonicus (Clavibacter michiganensis subsp. sepedonicus).